A 552-amino-acid chain; its full sequence is Chromosomal replication initiator protein DnaA (552 aa).

Positions Met1–Thr90 are domain I, interacts with DnaA modulators. Residues Thr90–Gly210 form a domain II region. The interval Glu113–Asn213 is disordered. Low complexity predominate over residues Pro155 to Gln170. Residues Ser211 to Ala427 form a domain III, AAA+ region region. Positions 255, 257, 258, and 259 each coordinate ATP. The tract at residues Ser428 to Ala552 is domain IV, binds dsDNA.

It belongs to the DnaA family. In terms of assembly, oligomerizes as a right-handed, spiral filament on DNA at oriC.

It is found in the cytoplasm. Its function is as follows. Plays an essential role in the initiation and regulation of chromosomal replication. ATP-DnaA binds to the origin of replication (oriC) to initiate formation of the DNA replication initiation complex once per cell cycle. Binds the DnaA box (a 9 base pair repeat at the origin) and separates the double-stranded (ds)DNA. Forms a right-handed helical filament on oriC DNA; dsDNA binds to the exterior of the filament while single-stranded (ss)DNA is stabiized in the filament's interior. The ATP-DnaA-oriC complex binds and stabilizes one strand of the AT-rich DNA unwinding element (DUE), permitting loading of DNA polymerase. After initiation quickly degrades to an ADP-DnaA complex that is not apt for DNA replication. Binds acidic phospholipids. The chain is Chromosomal replication initiator protein DnaA from Corynebacterium diphtheriae (strain ATCC 700971 / NCTC 13129 / Biotype gravis).